We begin with the raw amino-acid sequence, 365 residues long: MVYVSNKYLTMSEMKVNAQYILNYLSSNGWTKQAICGMLGNMQSESTINPGLWQNLDEGNTSLGFGLVQWTPASNYINWANSQGLPYKDMDSELKRIIWEVNNNAQWINLRDMTFKEYIKSTKTPRELAMIFLASYERPANPNQPERGDQAEYWYKNLSGGGGGGLQLAQFPMDIINISQGENGSFSHKGTLCIDFVGKTEKYPYYAPCDCTCVWRGDASAYLAWTSDKEVMCADGSVRYITWVNVHESPLPFDVGKKLKKGDLMGHTGIGGNVTGDHWHFNVIDGKEYQGWTKKPDSCLAGTELHIYDVFAVNNVEIINGNGYDWKTSDWQDGDGGDGDDDNDNNKTKDLITLLLSDALHGWKA.

Positions Met1–Ser159 are lysozyme-like glycosidase. Glu45 serves as the catalytic For lysozyme-like glycosidase activity. Substrate-binding positions include Glu45, Thr71, Gln106, and Glu137–Ala140. Residues Gly160–Gly165 are linker. The tract at residues Leu166–Ala365 is probable metalloendopeptidase. Residues His188, Asp195, and His280 each coordinate Zn(2+).

This sequence in the N-terminal section; belongs to the glycosyl hydrolase 24 family. It in the C-terminal section; belongs to the peptidase M23B family. Requires Zn(2+) as cofactor.

It localises to the virion. In terms of biological role, may serve as a plug to restrain the highly pressurized packaged genome and thus would be the first virion protein to contact the host cell wall, degrading the peptidoglycan layer and thereby facilitating viral genome entry into the host bacteria. Acts probably as a multifunctional enzyme that degrades N-acetylglucosamine polymers (in vitro) and cleaves the peptide cross-links of the host cell wall. Essential for the tail assembly. The chain is Morphogenesis protein 1 (13) from Bacillus subtilis (Bacteriophage phi-29).